The primary structure comprises 183 residues: Putative manganese efflux pump MntP (183 aa).

Transmembrane regions (helical) follow at residues 3–23 (TISVLITALALSMDAMSLSIY), 43–63 (TFGIFQFAMALVGSLSGILFI), 66–86 (ISLYSKYVSFAIFLFLGLMML), 107–127 (LIIMGIATSLDALLVGLTFSI), 134–154 (FLYTVEIGVITAIIAGLGFIL), and 161–181 (ILGQKSHFLGAALLIFISINI).

The protein belongs to the MntP (TC 9.B.29) family.

It is found in the cell inner membrane. In terms of biological role, probably functions as a manganese efflux pump. This chain is Putative manganese efflux pump MntP, found in Fusobacterium nucleatum subsp. nucleatum (strain ATCC 25586 / DSM 15643 / BCRC 10681 / CIP 101130 / JCM 8532 / KCTC 2640 / LMG 13131 / VPI 4355).